The following is an 861-amino-acid chain: Leucine--tRNA ligase (861 aa).

The 'HIGH' region signature appears at 42–52 (PYPSGNLHMGH). Residues 620–624 (KMSKS) carry the 'KMSKS' region motif. Lys-623 contacts ATP.

This sequence belongs to the class-I aminoacyl-tRNA synthetase family.

The protein localises to the cytoplasm. The catalysed reaction is tRNA(Leu) + L-leucine + ATP = L-leucyl-tRNA(Leu) + AMP + diphosphate. The chain is Leucine--tRNA ligase from Baumannia cicadellinicola subsp. Homalodisca coagulata.